A 767-amino-acid polypeptide reads, in one-letter code: ABC transporter B family member 4 (767 aa).

The disordered stretch occupies residues 81 to 104 (NYSSSSNSGNNNNNNYNNKNNNNN). Helical transmembrane passes span 208-228 (IWLF…GLQI), 252-272 (AIFI…MISV), 324-344 (VSLG…LILI), 350-370 (LGMM…AGWL), and 429-449 (IGIF…LVYW). An ABC transmembrane type-1 domain is found at 211–491 (FGFGIITAFF…LSILFTQIMS (281 aa)). Residues 524 to 760 (IKFINVDFKY…KGLYYKLVQR (237 aa)) enclose the ABC transporter domain. 559 to 566 (GSSGGGKS) contributes to the ATP binding site.

It belongs to the ABC transporter superfamily. ABCB family. Multidrug resistance exporter (TC 3.A.1.201) subfamily.

The protein resides in the membrane. This is ABC transporter B family member 4 (abcB4) from Dictyostelium discoideum (Social amoeba).